The chain runs to 286 residues: Histone H2A.v2 (286 aa).

Residues 1 to 26 (MKSNGHPSNNSINEPIKQQETKQNNK) are compositionally biased toward polar residues. The interval 1–180 (MKSNGHPSNN…KFKKTIRSSR (180 aa)) is disordered. Low complexity-rich tracts occupy residues 44–59 (QPKTSSFSNSSFQSST), 76–104 (QPKTSSSSYSSLSSPSPSQPKTSSPSLPS), and 115–138 (LKSPSSSSSSQPKTSSSSYSSLPS).

Belongs to the histone H2A family.

The polypeptide is Histone H2A.v2 (H2Av2) (Dictyostelium discoideum (Social amoeba)).